Consider the following 1603-residue polypeptide: Vitellogenin-3 (1603 aa).

Residues 1–15 form the signal peptide; it reads MKSIIIASLVALAIA. Positions 24–685 constitute a Vitellogenin domain; sequence FSPKSEYVYK…EKNAFLPKEV (662 aa). N-linked (GlcNAc...) asparagine glycosylation occurs at N1266. A VWFD domain is found at 1306–1475; sequence ATCKVGQSEV…SYLLKNEECE (170 aa). 2 disulfides stabilise this stretch: C1308-C1438 and C1330-C1474.

Expressed in the intestine of adult hermaphrodites.

Its subcellular location is the secreted. Functionally, precursor of the egg-yolk proteins that are sources of nutrients during embryonic development. Together with other vitellogenins, may play a role in modulating life-span, acting via induction of autophagy and lysosomal lipolysis. This is Vitellogenin-3 (vit-3) from Caenorhabditis elegans.